A 551-amino-acid polypeptide reads, in one-letter code: Solute carrier family 22 member 6 (551 aa).

The Cytoplasmic segment spans residues 1–9; sequence MAFNDLLKQ. The chain crosses the membrane as a helical span at residues 10–30; that stretch reads VGGVGRFQLIQVTMVVAPLLL. Residues 31-135 lie on the Extracellular side of the membrane; that stretch reads MASHNTLQNF…LVCSHRAFRQ (105 aa). Residues N39, N56, N92, and N113 are each glycosylated (N-linked (GlcNAc...) asparagine). The helical transmembrane segment at 136–156 threads the bilayer; sequence LAQSLYMVGVLLGAMVFGYLA. Residues 157-164 are Cytoplasmic-facing; the sequence is DRLGRRKV. The helical transmembrane segment at 165–187 threads the bilayer; sequence LILNYLQTAVSGTCAAYAPNYTV. Over 188-195 the chain is Extracellular; that stretch reads YCVFRLLS. A helical transmembrane segment spans residues 196 to 216; it reads GMSLASIAINCMTLNVEWMPI. Topologically, residues 217-224 are cytoplasmic; that stretch reads HTRAYVGT. The chain crosses the membrane as a helical span at residues 225–245; the sequence is LIGYVYSLGQFLLAGIAYAVP. Residues 246–248 lie on the Extracellular side of the membrane; the sequence is HWR. A helical membrane pass occupies residues 249 to 269; the sequence is HLQLVVSVPFFIAFIYSWFFI. The Cytoplasmic portion of the chain corresponds to 270-337; the sequence is ESARWYSSSG…ELLRCPTLRH (68 aa). Residues 338 to 358 form a helical membrane-spanning segment; sequence LFLCLSMLWFATSFAYYGLVM. The Extracellular segment spans residues 359–368; it reads DLQGFGVSMY. A helical transmembrane segment spans residues 369–389; sequence LIQVIFGAVDLPAKFVCFLVI. The Cytoplasmic segment spans residues 390-395; sequence NSMGRR. The helical transmembrane segment at 396–416 threads the bilayer; the sequence is PAQMASLLLAGICILVNGIIP. Over 417–425 the chain is Extracellular; sequence KSHTIIRTS. The chain crosses the membrane as a helical span at residues 426 to 446; that stretch reads LAVLGKGCLASSFNCIFLYTG. Residues 447 to 484 are Cytoplasmic-facing; it reads ELYPTVIRQTGLGMGSTMARVGSIVSPLVSMTAEFYPS. The chain crosses the membrane as a helical span at residues 485–505; sequence MPLFIFGAVPVVASAVTALLP. At 506 to 551 the chain is on the extracellular side; that stretch reads ETLGQPLPDTVQDLKSRSRGKQNQQQQEQQKQMMPLQASTQEKNGL. Residues 514–551 form a disordered region; that stretch reads DTVQDLKSRSRGKQNQQQQEQQKQMMPLQASTQEKNGL. Residues 526–537 show a composition bias toward low complexity; it reads KQNQQQQEQQKQ. The span at 542 to 551 shows a compositional bias: polar residues; sequence QASTQEKNGL.

The protein belongs to the major facilitator (TC 2.A.1) superfamily. Organic cation transporter (TC 2.A.1.19) family. In terms of processing, glycosylated. Glycosylation is necessary for proper targeting of the transporter to the plasma membrane. As to expression, highly expressed in kidney; in the particular segment of the proximal tubule. In kidney, found preferentially in the cortex and outer medulla and weakly in the inner medulla. Expressed to a lower extent in brain.

The protein localises to the cell membrane. The protein resides in the basolateral cell membrane. It localises to the basal cell membrane. It catalyses the reaction (6R)-L-erythro-5,6,7,8-tetrahydrobiopterin(out) + a dicarboxylate(in) = (6R)-L-erythro-5,6,7,8-tetrahydrobiopterin(in) + a dicarboxylate(out). The enzyme catalyses L-erythro-7,8-dihydrobiopterin(out) + a dicarboxylate(in) = L-erythro-7,8-dihydrobiopterin(in) + a dicarboxylate(out). The catalysed reaction is L-sepiapterin(out) + a dicarboxylate(in) = L-sepiapterin(in) + a dicarboxylate(out). It carries out the reaction prostaglandin F2alpha(out) + a dicarboxylate(in) = prostaglandin F2alpha(in) + a dicarboxylate(out). It catalyses the reaction prostaglandin E2(out) + a dicarboxylate(in) = prostaglandin E2(in) + a dicarboxylate(out). The enzyme catalyses 3',5'-cyclic AMP(out) + a dicarboxylate(in) = 3',5'-cyclic AMP(in) + a dicarboxylate(out). The catalysed reaction is 3',5'-cyclic GMP(out) + a dicarboxylate(in) = 3',5'-cyclic GMP(in) + a dicarboxylate(out). It carries out the reaction urate(out) + a dicarboxylate(in) = urate(in) + a dicarboxylate(out). It catalyses the reaction kynurenate(out) + glutarate(in) = kynurenate(in) + glutarate(out). The enzyme catalyses (indol-3-yl)acetate(out) + a dicarboxylate(in) = (indol-3-yl)acetate(in) + a dicarboxylate(out). The catalysed reaction is indoxyl sulfate(out) + a dicarboxylate(in) = indoxyl sulfate(in) + a dicarboxylate(out). It carries out the reaction N-benzoylglycine(out) + a dicarboxylate(in) = N-benzoylglycine(in) + a dicarboxylate(out). It catalyses the reaction 3-carboxy-4-methyl-5-propyl-2-furanpropanoate(out) + a dicarboxylate(in) = 3-carboxy-4-methyl-5-propyl-2-furanpropanoate(in) + a dicarboxylate(out). Functionally, secondary active transporter that functions as a Na(+)-independent organic anion (OA)/dicarboxylate antiporter where the uptake of one molecule of OA into the cell is coupled with an efflux of one molecule of intracellular dicarboxylate such as alpha-ketoglutarate or glutarate. Mediates the uptake of OA across the basolateral side of proximal tubule epithelial cells, thereby contributing to the renal elimination of endogenous OA from the systemic circulation into the urine. Function as a biopterin transporters involved in the uptake and the secretion of coenzymes tetrahydrobiopterin (BH4) dihydrobiopterin (BH2) and sepiapterin to urine, thereby determining baseline levels of blood biopterins. Transports prostaglandin E2 (PGE2) and prostaglandin F2-alpha (PGF2-alpha) and may contribute to their renal excretion. Also mediates the uptake of cyclic nucleotides such as cAMP and cGMP. Involved in the transport of neuroactive tryptophan metabolites kynurenate (KYNA) and xanthurenate (XA) and may contribute to their secretion from the brain. May transport glutamate. Also involved in the disposition of uremic toxins and potentially toxic xenobiotics by the renal organic anion secretory pathway, helping reduce their undesired toxicological effects on the body. Uremic toxins include the indoxyl sulfate (IS), hippurate, indole acetate (IA), 3-carboxy-4- methyl-5-propyl-2-furanpropionate(CMPF) and urate. Xenobiotics include the mycotoxin ochratoxin (OTA). May also contribute to the transport of organic compounds in testes across the blood-testis-barrier. May also work as a bidirectional OA/dicarboxylate exchanger. This is Solute carrier family 22 member 6 from Rattus norvegicus (Rat).